The chain runs to 24 residues: Humanin-like 3 (24 aa).

This sequence belongs to the humanin family. As to expression, highly expressed in testis. Also expressed in kidney, heart, skeletal muscles and brain.

It is found in the secreted. The protein localises to the cytoplasm. Its function is as follows. Plays a role as a neuroprotective and antiapoptotic factor. This is Humanin-like 3 from Homo sapiens (Human).